Consider the following 227-residue polypeptide: Orotidine 5'-phosphate decarboxylase (227 aa).

Substrate is bound by residues aspartate 8, lysine 30, aspartate 57–threonine 66, threonine 116, arginine 177, glutamine 186, glycine 206, and arginine 207. Lysine 59 functions as the Proton donor in the catalytic mechanism.

It belongs to the OMP decarboxylase family. Type 1 subfamily. Homodimer.

It carries out the reaction orotidine 5'-phosphate + H(+) = UMP + CO2. It participates in pyrimidine metabolism; UMP biosynthesis via de novo pathway; UMP from orotate: step 2/2. Catalyzes the decarboxylation of orotidine 5'-monophosphate (OMP) to uridine 5'-monophosphate (UMP). The sequence is that of Orotidine 5'-phosphate decarboxylase from Acinetobacter baumannii (strain AB307-0294).